The chain runs to 389 residues: Chorismate synthase (389 aa).

NADP(+) is bound by residues R40 and R46. FMN contacts are provided by residues 130–132 (RAS), 251–252 (QA), G297, 312–316 (KPIST), and R338.

It belongs to the chorismate synthase family. In terms of assembly, homotetramer. FMNH2 is required as a cofactor.

It carries out the reaction 5-O-(1-carboxyvinyl)-3-phosphoshikimate = chorismate + phosphate. Its pathway is metabolic intermediate biosynthesis; chorismate biosynthesis; chorismate from D-erythrose 4-phosphate and phosphoenolpyruvate: step 7/7. In terms of biological role, catalyzes the anti-1,4-elimination of the C-3 phosphate and the C-6 proR hydrogen from 5-enolpyruvylshikimate-3-phosphate (EPSP) to yield chorismate, which is the branch point compound that serves as the starting substrate for the three terminal pathways of aromatic amino acid biosynthesis. This reaction introduces a second double bond into the aromatic ring system. This is Chorismate synthase from Solibacter usitatus (strain Ellin6076).